The following is a 161-amino-acid chain: Peptidyl-prolyl cis-trans isomerase (161 aa).

Residues 6–160 (FFDIKAGDER…KKIIIEDCGE (155 aa)) form the PPIase cyclophilin-type domain.

Belongs to the cyclophilin-type PPIase family. PPIase A subfamily. As to expression, found mainly in the tegument, gut epithelium, and muscle layers. Also found in the interior of the parasite.

It catalyses the reaction [protein]-peptidylproline (omega=180) = [protein]-peptidylproline (omega=0). Its activity is regulated as follows. Binds cyclosporin A (CsA). CsA mediates some of its effects via an inhibitory action on PPIase. In terms of biological role, PPIases accelerate the folding of proteins. It catalyzes the cis-trans isomerization of proline imidic peptide bonds in oligopeptides. This chain is Peptidyl-prolyl cis-trans isomerase, found in Schistosoma mansoni (Blood fluke).